The following is a 79-amino-acid chain: Defensin-like protein 3 (79 aa).

The N-terminal stretch at Met1–Ala29 is a signal peptide. 4 disulfide bridges follow: Cys32-Cys79, Cys43-Cys64, Cys49-Cys73, and Cys53-Cys75.

Belongs to the DEFL family.

It is found in the secreted. In terms of biological role, possesses antifungal activity sensitive to inorganic cations. The sequence is that of Defensin-like protein 3 (AFP3) from Raphanus sativus (Radish).